Reading from the N-terminus, the 377-residue chain is Aspartate aminotransferase (377 aa).

L-aspartate is bound by residues Gly-37, Trp-123, and Asn-173. An N6-(pyridoxal phosphate)lysine modification is found at Lys-234. An L-aspartate-binding site is contributed by Arg-353.

Belongs to the class-I pyridoxal-phosphate-dependent aminotransferase family. As to quaternary structure, homodimer. Pyridoxal 5'-phosphate is required as a cofactor.

It localises to the cytoplasm. The enzyme catalyses L-aspartate + 2-oxoglutarate = oxaloacetate + L-glutamate. This is Aspartate aminotransferase (aspC) from Thermotoga maritima (strain ATCC 43589 / DSM 3109 / JCM 10099 / NBRC 100826 / MSB8).